The primary structure comprises 277 residues: Release factor glutamine methyltransferase (277 aa).

S-adenosyl-L-methionine is bound by residues 119–123 (GTGCG), D142, W170, and N184. Residue 184–187 (NPPY) coordinates substrate.

Belongs to the protein N5-glutamine methyltransferase family. PrmC subfamily.

It carries out the reaction L-glutaminyl-[peptide chain release factor] + S-adenosyl-L-methionine = N(5)-methyl-L-glutaminyl-[peptide chain release factor] + S-adenosyl-L-homocysteine + H(+). Functionally, methylates the class 1 translation termination release factors RF1/PrfA and RF2/PrfB on the glutamine residue of the universally conserved GGQ motif. This is Release factor glutamine methyltransferase from Buchnera aphidicola subsp. Baizongia pistaciae (strain Bp).